A 243-amino-acid chain; its full sequence is tRNA pseudouridine synthase A (243 aa).

Asp-51 functions as the Nucleophile in the catalytic mechanism. Tyr-111 serves as a coordination point for substrate.

The protein belongs to the tRNA pseudouridine synthase TruA family. In terms of assembly, homodimer.

It catalyses the reaction uridine(38/39/40) in tRNA = pseudouridine(38/39/40) in tRNA. Formation of pseudouridine at positions 38, 39 and 40 in the anticodon stem and loop of transfer RNAs. This is tRNA pseudouridine synthase A from Neorickettsia sennetsu (strain ATCC VR-367 / Miyayama) (Ehrlichia sennetsu).